A 232-amino-acid polypeptide reads, in one-letter code: Phosphatidylserine decarboxylase proenzyme (232 aa).

S190 functions as the Schiff-base intermediate with substrate; via pyruvic acid in the catalytic mechanism. A Pyruvic acid (Ser); by autocatalysis modification is found at S190.

Belongs to the phosphatidylserine decarboxylase family. PSD-A subfamily. Heterodimer of a large membrane-associated beta subunit and a small pyruvoyl-containing alpha subunit. Pyruvate is required as a cofactor. In terms of processing, is synthesized initially as an inactive proenzyme. Formation of the active enzyme involves a self-maturation process in which the active site pyruvoyl group is generated from an internal serine residue via an autocatalytic post-translational modification. Two non-identical subunits are generated from the proenzyme in this reaction, and the pyruvate is formed at the N-terminus of the alpha chain, which is derived from the carboxyl end of the proenzyme. The post-translation cleavage follows an unusual pathway, termed non-hydrolytic serinolysis, in which the side chain hydroxyl group of the serine supplies its oxygen atom to form the C-terminus of the beta chain, while the remainder of the serine residue undergoes an oxidative deamination to produce ammonia and the pyruvoyl prosthetic group on the alpha chain.

The protein localises to the cell membrane. It catalyses the reaction a 1,2-diacyl-sn-glycero-3-phospho-L-serine + H(+) = a 1,2-diacyl-sn-glycero-3-phosphoethanolamine + CO2. The protein operates within phospholipid metabolism; phosphatidylethanolamine biosynthesis; phosphatidylethanolamine from CDP-diacylglycerol: step 2/2. Catalyzes the formation of phosphatidylethanolamine (PtdEtn) from phosphatidylserine (PtdSer). The protein is Phosphatidylserine decarboxylase proenzyme of Brucella anthropi (strain ATCC 49188 / DSM 6882 / CCUG 24695 / JCM 21032 / LMG 3331 / NBRC 15819 / NCTC 12168 / Alc 37) (Ochrobactrum anthropi).